A 302-amino-acid chain; its full sequence is Lipoyl synthase (302 aa).

[4Fe-4S] cluster-binding residues include Cys54, Cys59, Cys65, Cys80, Cys84, Cys87, and Ser291. A Radical SAM core domain is found at 66–280; the sequence is WSRKTATYML…RIYGKSIGFK (215 aa).

This sequence belongs to the radical SAM superfamily. Lipoyl synthase family. It depends on [4Fe-4S] cluster as a cofactor.

Its subcellular location is the cytoplasm. The enzyme catalyses [[Fe-S] cluster scaffold protein carrying a second [4Fe-4S](2+) cluster] + N(6)-octanoyl-L-lysyl-[protein] + 2 oxidized [2Fe-2S]-[ferredoxin] + 2 S-adenosyl-L-methionine + 4 H(+) = [[Fe-S] cluster scaffold protein] + N(6)-[(R)-dihydrolipoyl]-L-lysyl-[protein] + 4 Fe(3+) + 2 hydrogen sulfide + 2 5'-deoxyadenosine + 2 L-methionine + 2 reduced [2Fe-2S]-[ferredoxin]. It participates in protein modification; protein lipoylation via endogenous pathway; protein N(6)-(lipoyl)lysine from octanoyl-[acyl-carrier-protein]: step 2/2. Functionally, catalyzes the radical-mediated insertion of two sulfur atoms into the C-6 and C-8 positions of the octanoyl moiety bound to the lipoyl domains of lipoate-dependent enzymes, thereby converting the octanoylated domains into lipoylated derivatives. In Leptospira borgpetersenii serovar Hardjo-bovis (strain JB197), this protein is Lipoyl synthase.